Reading from the N-terminus, the 215-residue chain is MSENSNHHCIIVGIAGASASGKSLIASTIYNELRAKVGDHQIGVITEDSYYKDQSHLTMEERVKTNYDHPNALDHRLLSEHLEQLMRGEAVNIPTYSYTEHTRTSDVEVMTPKKVIILEGILLLTDPRLRNLMHASVFMDTPLDICLLRRAKRDVEERGRSMESVFEQYQKTVRPMFMQFIDPSKQHADIIVPRGGKNRIAIDVLKAHISRLLKA.

16 to 23 (GASASGKS) serves as a coordination point for ATP.

The protein belongs to the uridine kinase family.

It is found in the cytoplasm. The enzyme catalyses uridine + ATP = UMP + ADP + H(+). It carries out the reaction cytidine + ATP = CMP + ADP + H(+). The protein operates within pyrimidine metabolism; CTP biosynthesis via salvage pathway; CTP from cytidine: step 1/3. Its pathway is pyrimidine metabolism; UMP biosynthesis via salvage pathway; UMP from uridine: step 1/1. The polypeptide is Uridine kinase (Aliivibrio salmonicida (strain LFI1238) (Vibrio salmonicida (strain LFI1238))).